We begin with the raw amino-acid sequence, 406 residues long: Sorting nexin-6 (406 aa).

Methionine 1 is modified (N-acetylmethionine). Methionine 2 carries the post-translational modification N-acetylmethionine; in Sorting nexin-6, N-terminally processed. Positions methionine 2–asparagine 179 are interaction with PIM1. The region spanning leucine 26–leucine 173 is the PX domain. A 1,2-diacyl-sn-glycero-3-phospho-(1D-myo-inositol-4,5-bisphosphate)-binding positions include serine 41–lysine 47, phenylalanine 100–lysine 106, and glutamate 114–methionine 117. A phosphoserine mark is found at serine 116 and serine 194. A membrane-binding amphipathic helix region spans residues glutamate 182–isoleucine 199. Residues valine 203–threonine 406 enclose the BAR domain.

The protein belongs to the sorting nexin family. In terms of assembly, forms heterodimers with BAR domain-containing sorting nexins SNX1 and SNX2. The heterodimers are proposed to self-assemble into helical arrays on the membrane to stabilize and expand local membrane curvature underlying endosomal tubule formation. Thought to be a component of the originally described retromer complex (also called SNX-BAR retromer) which is a pentamer containing the heterotrimeric retromer cargo-selective complex (CSC), also described as vacuolar protein sorting subcomplex (VPS), and a heterodimeric membrane-deforming subcomplex formed between SNX1 or SNX2 and SNX5 or SNX6 (also called SNX-BAR subcomplex); the respective CSC and SNX-BAR subcomplexes associate with low affinity. Interacts with SNX1, SNX2, VPS26A, VPS29, VPS35, TGFB receptors, BACE1, BRMS1, PIP5K1C. Interacts with DCTN1; the association with DCTN1 is involved in movement of retromer-c ontaining vesicles toward the TGN. Interacts with PIM1; translocating SNX6 to the nucleus. Interacts with CDKN1B and GIT1. In terms of processing, in vitro phosphorylated by PIM1; not affecting PIM1-dependent nuclear translocation.

Its subcellular location is the early endosome membrane. It localises to the cytoplasmic vesicle. It is found in the cytoplasm. The protein resides in the nucleus. Involved in several stages of intracellular trafficking. Interacts with membranes phosphatidylinositol 3,4-bisphosphate and/or phosphatidylinositol 4,5-bisphosphate. Acts in part as component of the retromer membrane-deforming SNX-BAR subcomplex. The SNX-BAR retromer mediates retrograde transport of cargo proteins from endosomes to the trans-Golgi network (TGN) and is involved in endosome-to-plasma membrane transport for cargo protein recycling. The SNX-BAR subcomplex functions to deform the donor membrane into a tubular profile called endosome-to-TGN transport carrier (ETC). Does not have in vitro vesicle-to-membrane remodeling activity. Involved in retrograde endosome-to-TGN transport of lysosomal enzyme receptor IGF2R. May function as link between transport vesicles and dynactin. Negatively regulates retrograde transport of BACE1 from the cell surface to the trans-Golgi network. Involved in E-cadherin sorting and degradation; inhibits PIP5K1C-mediated E-cadherin degradation. In association with GIT1 involved in EGFR degradation. Promotes lysosomal degradation of CDKN1B. May contribute to transcription regulation. This Pongo abelii (Sumatran orangutan) protein is Sorting nexin-6 (SNX6).